Reading from the N-terminus, the 60-residue chain is Large ribosomal subunit protein bL32 (60 aa).

This sequence belongs to the bacterial ribosomal protein bL32 family.

This Thermosipho melanesiensis (strain DSM 12029 / CIP 104789 / BI429) protein is Large ribosomal subunit protein bL32.